The following is a 171-amino-acid chain: Transcription factor pcr1 (171 aa).

Positions 10–73 (DEKRRRILER…FRLKSQLLAH (64 aa)) constitute a bZIP domain. Residues 12–51 (KRRRILERNRIAASKFRQKKKEWIKELEQTANAAFEQSKR) form a basic motif region. The tract at residues 52–66 (LQLLLSQLQQEAFRL) is leucine-zipper. The interval 125 to 171 (QMHPSLQGLPPNQHPQMPPSSQQPNSDDVQQHMFSAAGLPRSLGGPI) is disordered. A compositionally biased stretch (low complexity) spans 143 to 152 (PSSQQPNSDD).

Belongs to the bZIP family. As to quaternary structure, heterodimer of pcr1/mts2 and atf1/mts1.

The protein resides in the nucleus. Its function is as follows. Involved in regulation of gene expression for sexual development. Binds and activates CRE sites (cAMP-response elements, also known as M26 meiotic recombination hotspots). The polypeptide is Transcription factor pcr1 (pcr1) (Schizosaccharomyces pombe (strain 972 / ATCC 24843) (Fission yeast)).